A 156-amino-acid chain; its full sequence is Histone acetyltransferase HPA2 (156 aa).

The N-acetyltransferase domain maps to 9-156 (ITVRFVTEND…PKILYKRKGY (148 aa)). 93-106 (LYVDENSRVKGAGG) serves as a coordination point for acetyl-CoA.

It belongs to the acetyltransferase family. GNAT subfamily. In terms of assembly, forms homodimers in the absence, and homotetramers in the presence of acetyl-CoA. Post-translationally, autoacetylates in an intermolecular reaction.

It catalyses the reaction L-lysyl-[protein] + acetyl-CoA = N(6)-acetyl-L-lysyl-[protein] + CoA + H(+). N-acetyltransferase that acetylates histone H3 at 'Lys-14' and histone H4 at 'Lys-5' and 'Lys-12'. Also acetylates polyamines like putrescine, spermidine and spermine, and certain other small basic proteins like nuclear HMG proteins. The chain is Histone acetyltransferase HPA2 from Saccharomyces cerevisiae (strain ATCC 204508 / S288c) (Baker's yeast).